A 366-amino-acid chain; its full sequence is GTP cyclohydrolase 1 type 2 homolog (366 aa).

A divalent metal cation contacts are provided by histidine 64, histidine 65, aspartate 102, histidine 326, and glutamate 329.

This sequence belongs to the GTP cyclohydrolase I type 2/NIF3 family. Homohexamer.

In Staphylococcus epidermidis (strain ATCC 35984 / DSM 28319 / BCRC 17069 / CCUG 31568 / BM 3577 / RP62A), this protein is GTP cyclohydrolase 1 type 2 homolog.